The chain runs to 244 residues: Phosphoadenosine 5'-phosphosulfate reductase (244 aa).

The Nucleophile; cysteine thiosulfonate intermediate role is filled by Cys239.

This sequence belongs to the PAPS reductase family. CysH subfamily.

It localises to the cytoplasm. The catalysed reaction is [thioredoxin]-disulfide + sulfite + adenosine 3',5'-bisphosphate + 2 H(+) = [thioredoxin]-dithiol + 3'-phosphoadenylyl sulfate. Its pathway is sulfur metabolism; hydrogen sulfide biosynthesis; sulfite from sulfate: step 3/3. Catalyzes the formation of sulfite from phosphoadenosine 5'-phosphosulfate (PAPS) using thioredoxin as an electron donor. The chain is Phosphoadenosine 5'-phosphosulfate reductase from Sodalis glossinidius (strain morsitans).